We begin with the raw amino-acid sequence, 144 residues long: 3-hydroxyacyl-[acyl-carrier-protein] dehydratase FabZ (144 aa).

The active site involves histidine 51.

It belongs to the thioester dehydratase family. FabZ subfamily.

The protein resides in the cytoplasm. The catalysed reaction is a (3R)-hydroxyacyl-[ACP] = a (2E)-enoyl-[ACP] + H2O. Functionally, involved in unsaturated fatty acids biosynthesis. Catalyzes the dehydration of short chain beta-hydroxyacyl-ACPs and long chain saturated and unsaturated beta-hydroxyacyl-ACPs. This chain is 3-hydroxyacyl-[acyl-carrier-protein] dehydratase FabZ, found in Clostridium botulinum (strain Okra / Type B1).